A 911-amino-acid polypeptide reads, in one-letter code: Protein transport protein SEC24-1 (911 aa).

Residues 108–123 (QPLPQQQQQQQQQQGP) are compositionally biased toward low complexity. The tract at residues 108-130 (QPLPQQQQQQQQQQGPAKPPKPM) is disordered. Zn(2+) is bound by residues cysteine 226, cysteine 229, cysteine 248, and cysteine 251. A zinc finger-like region spans residues 226–251 (CRRCRSYMNPFVHFNQDGRRWKCNIC).

Belongs to the SEC23/SEC24 family. SEC24 subfamily. In terms of assembly, the COPII coat is composed of at least 5 proteins: the SEC23/24 complex, the SEC13/31 complex, and the protein SAR1. Golgi apparatus membrane; Peripheral membrane protein; Cytoplasmic side.

The protein localises to the cytoplasm. Its subcellular location is the cytoplasmic vesicle. The protein resides in the COPII-coated vesicle membrane. It is found in the endoplasmic reticulum membrane. It localises to the golgi apparatus membrane. Component of the coat protein complex II (COPII) which promotes the formation of transport vesicles from the endoplasmic reticulum (ER). The coat has two main functions, the physical deformation of the endoplasmic reticulum membrane into vesicles and the selection of cargo molecules. This Naumovozyma castellii (Yeast) protein is Protein transport protein SEC24-1 (SEC241).